The following is a 230-amino-acid chain: Small ribosomal subunit protein uS7m (230 aa).

This sequence belongs to the universal ribosomal protein uS7 family. In terms of assembly, part of the small ribosomal subunit.

The protein resides in the mitochondrion. Its function is as follows. One of the primary rRNA binding proteins, it binds directly to 18S rRNA where it nucleates assembly of the head domain of the small subunit. The chain is Small ribosomal subunit protein uS7m (RPS7) from Marchantia polymorpha (Common liverwort).